The chain runs to 476 residues: Adenosylhomocysteinase (476 aa).

Thr67, Asp142, and Glu202 together coordinate substrate. Thr203 to Thr205 lines the NAD(+) pocket. 2 residues coordinate substrate: Lys232 and Asp236. Residues Asn237, Gly266–Gly271, Glu289, Asn324, Ile345–His347, and Asn390 contribute to the NAD(+) site.

It belongs to the adenosylhomocysteinase family. It depends on NAD(+) as a cofactor.

It localises to the cytoplasm. The enzyme catalyses S-adenosyl-L-homocysteine + H2O = L-homocysteine + adenosine. The protein operates within amino-acid biosynthesis; L-homocysteine biosynthesis; L-homocysteine from S-adenosyl-L-homocysteine: step 1/1. May play a key role in the regulation of the intracellular concentration of adenosylhomocysteine. The sequence is that of Adenosylhomocysteinase from Synechococcus sp. (strain CC9902).